The chain runs to 380 residues: L-lactate dehydrogenase (380 aa).

The region spanning 1 to 380 is the FMN hydroxy acid dehydrogenase domain; that stretch reads MIISSASDYR…DASILVKAVA (380 aa). Position 24 (Tyr-24) interacts with substrate. Residues Ser-106 and Gln-127 each coordinate FMN. A substrate-binding site is contributed by Tyr-129. Thr-155 is an FMN binding site. Arg-164 serves as a coordination point for substrate. Residue Lys-251 participates in FMN binding. His-275 (proton acceptor) is an active-site residue. Arg-278 provides a ligand contact to substrate. Residue 306–330 coordinates FMN; that stretch reads DSGIRSGLDVVRMLALGAKGVLLGR.

The protein belongs to the FMN-dependent alpha-hydroxy acid dehydrogenase family. Homotetramer. FMN is required as a cofactor.

The protein localises to the cell inner membrane. It catalyses the reaction (S)-lactate + A = pyruvate + AH2. Its function is as follows. Catalyzes the conversion of L-lactate to pyruvate. Is coupled to the respiratory chain. The chain is L-lactate dehydrogenase from Pseudomonas syringae pv. syringae (strain B728a).